Consider the following 335-residue polypeptide: Trans-1,2-dihydrobenzene-1,2-diol dehydrogenase (335 aa).

It belongs to the Gfo/Idh/MocA family. Homodimer. In terms of tissue distribution, liver, lens, spleen, kidney and small intestine.

It catalyses the reaction (1R,2R)-1,2-dihydrobenzene-1,2-diol + NADP(+) = catechol + NADPH + H(+). It carries out the reaction D-xylose + NADP(+) = D-xylono-1,5-lactone + NADPH + H(+). Its activity is regulated as follows. Strongly inhibited by isoascorbic acid, 4-hydroxyacetophenone and chloromercuriphenylsulphonate. Stimulated by various salts. This Sus scrofa (Pig) protein is Trans-1,2-dihydrobenzene-1,2-diol dehydrogenase (DHDH).